The sequence spans 1002 residues: Calmin (1002 aa).

An actin-binding region spans residues 1–288; the sequence is MAAHEWDWFQ…IMTYVAQFLE (288 aa). The Calponin-homology (CH) 1 domain maps to 32–139; the sequence is NVQKRTFTRW…LIWNIILFFQ (108 aa). Residues 149 to 168 show a composition bias toward low complexity; sequence RNSPSSSLSPGSGGTDSDSS. The disordered stretch occupies residues 149–180; sequence RNSPSSSLSPGSGGTDSDSSFPPTPTAERSVA. The 105-residue stretch at 187–291 folds into the Calponin-homology (CH) 2 domain; it reads RKAIKALLAW…YVAQFLERFP (105 aa). Residues serine 301 and serine 402 each carry the phosphoserine modification. Disordered stretches follow at residues 389–418, 500–532, 581–716, and 749–911; these read QGGP…GRSN, NNNS…GENT, NKVP…SPPL, and DLKN…DSSI. Positions 396–409 are enriched in low complexity; that stretch reads SDISEPSPESSILS. Over residues 500–509 the composition is skewed to polar residues; that stretch reads NNNSQSSSCN. Positions 585–606 are enriched in basic and acidic residues; sequence SPHETKPDEDAEAFENHAEKLG. The span at 607–617 shows a compositional bias: basic residues; that stretch reads KRSIKSAHKKK. Composition is skewed to basic and acidic residues over residues 618–635 and 650–659; these read DSPE…HQDS and PVDKKPEVHE. Serine 619 carries the post-translational modification Phosphoserine. Residues 681-697 show a composition bias toward low complexity; the sequence is GVGEELSSSPPSSCVSL. Threonine 699 is subject to Phosphothreonine. Serine 713 and serine 769 each carry phosphoserine. Residues 776 to 794 are compositionally biased toward low complexity; that stretch reads GSQSSSSSSVPGESLPSAS. A compositionally biased stretch (basic and acidic residues) spans 818 to 834; sequence PHEDHQQRETKENDPMD. Residues 835 to 846 are compositionally biased toward polar residues; that stretch reads SHQSQESPNLEN. A phosphoserine mark is found at serine 838 and serine 841. Residues 854-863 show a composition bias toward basic and acidic residues; that stretch reads NVTKESISSK. Positions 898-910 are enriched in polar residues; the sequence is YSIPSRTSHSDSS. The residue at position 907 (serine 907) is a Phosphoserine. The helical; Anchor for type IV membrane protein transmembrane segment at 977 to 997 threads the bilayer; sequence MMYFILFLWLLVYCLLLFPQL.

As to expression, widely expressed at intermediate level.

It localises to the membrane. This is Calmin (CLMN) from Homo sapiens (Human).